Consider the following 148-residue polypeptide: Large ribosomal subunit protein uL15 (148 aa).

Positions 1–51 (MNLSNLKPAEGSTKTRKRIGRGPGSGLGGTSTRGHKGAKSRSGYKNKIGFE) are disordered. A compositionally biased stretch (gly residues) spans 21–31 (RGPGSGLGGTS). Over residues 33 to 44 (RGHKGAKSRSGY) the composition is skewed to basic residues.

Belongs to the universal ribosomal protein uL15 family. As to quaternary structure, part of the 50S ribosomal subunit.

Binds to the 23S rRNA. The protein is Large ribosomal subunit protein uL15 of Parabacteroides distasonis (strain ATCC 8503 / DSM 20701 / CIP 104284 / JCM 5825 / NCTC 11152).